The sequence spans 502 residues: Arginine decarboxylase (502 aa).

Lys-42 carries the N6-(pyridoxal phosphate)lysine modification. Position 226 to 236 (226 to 236 (IDIGGGLGIDY)) interacts with substrate.

Belongs to the Orn/Lys/Arg decarboxylase class-II family. SpeA subfamily. Requires pyridoxal 5'-phosphate as cofactor. The cofactor is Mg(2+).

The enzyme catalyses L-arginine + H(+) = agmatine + CO2. It participates in amine and polyamine biosynthesis; agmatine biosynthesis; agmatine from L-arginine: step 1/1. The chain is Arginine decarboxylase from Solanum lycopersicum (Tomato).